Consider the following 484-residue polypeptide: MSIFRTASTLALATALALAAGPAFSYSINNSRQIVDDSGKVVQLKGVNVFGFETGNHVMHGLWARNWKDMIVQMQGLGFNAVRLPFCPATLRSDTMPASIDYSRNADLQGLTSLQILDKVIAEFNARGMYVLLDHHTPDCAGISELWYTGSYTEAQWLADLRFVANRYKNVPYVLGLDLKNEPHGAATWGTGNAATDWNKAAERGSAAVLAVAPKWLIAVEGITDNPVCSTNGGIFWGGNLQPLACTPLNIPANRLLLAPHVYGPDVFVQSYFNDSNFPNNMPAIWERHFGQFAGTHALLLGEFGGKYGEGDARDKTWQDALVKYLRSKGINQGFYWSWNPNSGDTGGILRDDWTSVRQDKMTLLRTLWGTAGNTTPTPTPTPTPTPTPTPTPTPTPTPGTSTFSTKVIVDNSWNGGYCNRVQVTNTGTASGTWSIAVPVTGTVNNAWNATWSQSGSTLRASGVDFNRTLAAGATAEFGFCAAS.

The N-terminal stretch at Met1–Ser25 is a signal peptide. Catalysis depends on Glu182, which acts as the Proton donor. Residue Glu303 is the Nucleophile of the active site. The interval Gly370–Ser402 is disordered. Residues Thr375–Pro399 form a thr-Pro repeats ('hinge') (Pro-Thr box) region. The segment covering Thr378–Thr398 has biased composition (pro residues). The CBM2 domain occupies Pro395–Ser484.

This sequence belongs to the glycosyl hydrolase 5 (cellulase A) family.

The enzyme catalyses Endohydrolysis of (1-&gt;4)-beta-D-glucosidic linkages in cellulose, lichenin and cereal beta-D-glucans.. The polypeptide is Major extracellular endoglucanase (engXCA) (Xanthomonas campestris pv. campestris (strain ATCC 33913 / DSM 3586 / NCPPB 528 / LMG 568 / P 25)).